The chain runs to 370 residues: MAKDVFAVPIFFICFRECVETSIIVSVLLSFIKQTLGQEQDATTRKRLIRQVWWGVAIGLFISVCIGAGMIGAFYGYGKDHFASTEDLWEGIFSLIASVIITIMGAALLRVTKLQEKWRVKLAQALEAKPLTGGTFKNNLKLWAEKYAMFLLPFITVLREGLEAVVFIGGVSLSFPATAFPLPVFTGILAGVAIGYLLYRGGNQASLQIFLIISTCILYLVAAGLFSRGVWYLENNTWNHVIGGDAAETGAGPGSYDIRQSVWHVNCCSPLVNGGGGWGIFNAILGWTNSATYGSVLSYNLYWIAVIVWFVAMRHKERHGRLPVVDPLLNRLRGRKSAEPGNGEQDVEVSTIPSDLQTESKIPKSGASLV.

7 helical membrane-spanning segments follow: residues 5–25, 52–72, 88–108, 148–168, 179–199, 206–226, and 293–313; these read VFAVPIFFICFRECVETSIIV, VWWGVAIGLFISVCIGAGMIG, LWEGIFSLIASVIITIMGAAL, AMFLLPFITVLREGLEAVVFI, AFPLPVFTGILAGVAIGYLLY, SLQIFLIISTCILYLVAAGLF, and YGSVLSYNLYWIAVIVWFVAM. The segment at 335-370 is disordered; it reads RKSAEPGNGEQDVEVSTIPSDLQTESKIPKSGASLV. The span at 351–360 shows a compositional bias: polar residues; it reads TIPSDLQTES.

The protein belongs to the oxidase-dependent Fe transporter (OFeT) (TC 9.A.10.1) family.

Its subcellular location is the cell membrane. In terms of biological role, high affinity iron permease; part of the reductive iron assimilatory system (RIA), a siderophore-independent high affinity iron uptake mechanism. The chain is High affinity iron permease ftrA from Aspergillus fumigatus (strain ATCC MYA-4609 / CBS 101355 / FGSC A1100 / Af293) (Neosartorya fumigata).